An 869-amino-acid chain; its full sequence is DNA mismatch repair protein MutS (869 aa).

Position 602–609 (glycine 602–serine 609) interacts with ATP.

It belongs to the DNA mismatch repair MutS family.

This protein is involved in the repair of mismatches in DNA. It is possible that it carries out the mismatch recognition step. This protein has a weak ATPase activity. The chain is DNA mismatch repair protein MutS from Staphylococcus carnosus (strain TM300).